An 89-amino-acid polypeptide reads, in one-letter code: Small ribosomal subunit protein uS15 (89 aa).

Belongs to the universal ribosomal protein uS15 family. As to quaternary structure, part of the 30S ribosomal subunit. Forms a bridge to the 50S subunit in the 70S ribosome, contacting the 23S rRNA.

In terms of biological role, one of the primary rRNA binding proteins, it binds directly to 16S rRNA where it helps nucleate assembly of the platform of the 30S subunit by binding and bridging several RNA helices of the 16S rRNA. Functionally, forms an intersubunit bridge (bridge B4) with the 23S rRNA of the 50S subunit in the ribosome. This is Small ribosomal subunit protein uS15 from Streptococcus equi subsp. zooepidemicus (strain H70).